A 560-amino-acid polypeptide reads, in one-letter code: Trafficking protein particle complex II-specific subunit 65 (560 aa).

Positions 164 to 193 (SSKNTNNHLEKNNRATHRVSSKNSEVHEAD) are disordered. Phosphoserine occurs at positions 393 and 398.

Part of the multisubunit TRAPP (transport protein particle) II complex composed of BET3, BET5, TRS20, TRS23, TRS31, TRS33, TRS65, TRS120 and TRS130. Interacts directly with TRS120 and TRS130.

It localises to the cytoplasm. It is found in the golgi apparatus. The protein localises to the cis-Golgi network. It participates in glycan metabolism; beta-glucan biosynthesis. Functionally, specific subunit of the TRAPP II complex, a highly conserved vesicle tethering complex that functions in the late Golgi as a guanine nucleotide exchanger (GEF) for the Golgi YPT1 GTPase. TRS65 plays a role in the YPT GEF activity of TRAPP II in concert with the two other TRAPP II-specific subunits TRS120 and TRS130. Involved in cell wall (1--&gt;6)-beta-glucan synthesis. In Saccharomyces cerevisiae (strain ATCC 204508 / S288c) (Baker's yeast), this protein is Trafficking protein particle complex II-specific subunit 65 (TRS65).